The primary structure comprises 206 residues: MLDKLITELDKGLRTLCAPAHSGRAHPDQDIAEADLSAAEKKHALGLMRVNHCGEVCAQALYQGQALTARDASAREALRQAAQEEVEHLAWTERRIRELGGRPSLLNPLWYTGSLALGVAAGVLGDKWNLGFLQETERQVGAHLDSHLSALPPDDARSRAIVRQMRDDELQHAEMAHELGAAELPAPVKAAMKLSAKVMTGSSYRV.

Fe cation contacts are provided by Glu55, Glu85, His88, Glu137, Glu169, and His172.

The protein belongs to the COQ7 family. The cofactor is Fe cation.

It localises to the cell membrane. The enzyme catalyses a 5-methoxy-2-methyl-3-(all-trans-polyprenyl)benzene-1,4-diol + AH2 + O2 = a 3-demethylubiquinol + A + H2O. Its pathway is cofactor biosynthesis; ubiquinone biosynthesis. In terms of biological role, catalyzes the hydroxylation of 2-nonaprenyl-3-methyl-6-methoxy-1,4-benzoquinol during ubiquinone biosynthesis. The sequence is that of 3-demethoxyubiquinol 3-hydroxylase from Chromobacterium violaceum (strain ATCC 12472 / DSM 30191 / JCM 1249 / CCUG 213 / NBRC 12614 / NCIMB 9131 / NCTC 9757 / MK).